The following is a 504-amino-acid chain: MSLIEGLLQTSSTVTLLGTVLFLLVPYLRSSGSSSEEQGKEPPGPRPLPLLGNMLQLDLKKPYCTLCELSKKYGSIFTVHFGSKKVVVLAGYKTVKQALVNQAEDFGERDITPAFYDFNQGHGILFTNGDSWKEMRRFALTNLRDFGMGKKGSEEKILEEIPYLIEVLEKHEGKAFDTTQSVHHAVSNIISAIVYGSRFEYTDPLFTGMVDRVNENVHLIGSASIQMYNMFPWLGPWINNLTRLKKNVADLKMEVIELVRGLKETLNPHMCRGFVDSFLVRKQTLEESGKMDSFYHDDNLLFSIGNLFGAGTDTTGTTLRWGLLLMAKYPHIQDQVQEEISRVIGSRQTLVEDRKNLPYTDAVIHETQRLANISPMAVPHTTSRDVTFQGYFIKKGTSVIPLLMSVLQDDNEWESPNTFNPSHFLDEQGGFVKRDAFMAFSAGRRVCLGEGLARMELFLFFTSLLQRFRFSPPPGVTEDDLDLTPLLGFTLHPSPHQLCAVSRV.

Heme is bound at residue C447.

The protein belongs to the cytochrome P450 family. It depends on heme as a cofactor.

The protein localises to the endoplasmic reticulum membrane. The protein resides in the microsome membrane. The enzyme catalyses an organic molecule + reduced [NADPH--hemoprotein reductase] + O2 = an alcohol + oxidized [NADPH--hemoprotein reductase] + H2O + H(+). The polypeptide is Cytochrome P450 2K4 (cyp2k4) (Oncorhynchus mykiss (Rainbow trout)).